Reading from the N-terminus, the 215-residue chain is Ribonuclease (215 aa).

The signal sequence occupies residues 1–22 (MKKIVVLLGMLLAPWFSSAVQA). Active-site residues include His-62, Glu-102, and His-106. Residues 144–166 (KPLPAQGGSGQCQRLAGPGQHHG) form a disordered region.

The protein belongs to the RNase T2 family.

The protein localises to the periplasm. It localises to the cytoplasm. One of the few RNases that cleave the phosphodiester bond between any two nucleotide. Shows a preference for adenylic acid. This chain is Ribonuclease, found in Aeromonas hydrophila.